We begin with the raw amino-acid sequence, 154 residues long: Cyclin-dependent protein kinase inhibitor SMR11 (154 aa).

Residues 1 to 44 are disordered; it reads MEQEEPCEAKETASSSIEPKTPNPNVPDSIPAIDSDSSLSEEEI. Low complexity predominate over residues 27–38; it reads PDSIPAIDSDSS.

In terms of assembly, interacts with CYCB2-4.

Probable cyclin-dependent protein kinase (CDK) inhibitor that functions as a repressor of mitosis in the endoreduplication cell cycle. This is Cyclin-dependent protein kinase inhibitor SMR11 from Arabidopsis thaliana (Mouse-ear cress).